The chain runs to 425 residues: Proline iminopeptidase (425 aa).

In terms of domain architecture, AB hydrolase-1 spans 52–315 (PWLLYLQGGP…EFPALAWAQG (264 aa)). The active-site Nucleophile is the S146. The active site involves D351. Catalysis depends on H404, which acts as the Proton donor.

It belongs to the peptidase S33 family. In terms of assembly, homotetramer.

The protein resides in the cytoplasm. It catalyses the reaction Release of N-terminal proline from a peptide.. In terms of biological role, higher activity toward long peptides. Acts on hydroxyproline beta-naphthylamide with almost as high an activity as on proline beta-naphthylamide. In Aeromonas sobria, this protein is Proline iminopeptidase (pip).